Consider the following 250-residue polypeptide: Agamous-like MADS-box protein AGL8 homolog (250 aa).

The region spanning 3–57 is the MADS-box domain; that stretch reads RGRVQLKRIENKINRQVTFSKRRSGLLKKAHEISVLCDAEVGLIVFSTKGKLFEY. One can recognise a K-box domain in the interval 88–178; sequence PGSWTLEHAK…SKKVKEREKE (91 aa).

As to expression, abundant in vegetative organs.

Its subcellular location is the nucleus. Functionally, probable transcription factor. The chain is Agamous-like MADS-box protein AGL8 homolog from Solanum tuberosum (Potato).